A 229-amino-acid polypeptide reads, in one-letter code: Putative N-acetylmannosamine-6-phosphate 2-epimerase 2 (229 aa).

The protein belongs to the NanE family.

It carries out the reaction an N-acyl-D-glucosamine 6-phosphate = an N-acyl-D-mannosamine 6-phosphate. The protein operates within amino-sugar metabolism; N-acetylneuraminate degradation; D-fructose 6-phosphate from N-acetylneuraminate: step 3/5. Converts N-acetylmannosamine-6-phosphate (ManNAc-6-P) to N-acetylglucosamine-6-phosphate (GlcNAc-6-P). This is Putative N-acetylmannosamine-6-phosphate 2-epimerase 2 from Salmonella paratyphi A (strain ATCC 9150 / SARB42).